The sequence spans 200 residues: Glycerol-3-phosphate acyltransferase (200 aa).

The next 5 helical transmembrane spans lie at Phe2 to Val22, Lys51 to Ala71, Ala84 to Phe104, Leu114 to Val134, and Phe159 to Phe179.

This sequence belongs to the PlsY family. As to quaternary structure, probably interacts with PlsX.

The protein localises to the cell inner membrane. The enzyme catalyses an acyl phosphate + sn-glycerol 3-phosphate = a 1-acyl-sn-glycero-3-phosphate + phosphate. It participates in lipid metabolism; phospholipid metabolism. Its function is as follows. Catalyzes the transfer of an acyl group from acyl-phosphate (acyl-PO(4)) to glycerol-3-phosphate (G3P) to form lysophosphatidic acid (LPA). This enzyme utilizes acyl-phosphate as fatty acyl donor, but not acyl-CoA or acyl-ACP. The sequence is that of Glycerol-3-phosphate acyltransferase from Neisseria meningitidis serogroup C / serotype 2a (strain ATCC 700532 / DSM 15464 / FAM18).